Reading from the N-terminus, the 131-residue chain is Large ribosomal subunit protein bL17 (131 aa).

The protein belongs to the bacterial ribosomal protein bL17 family. Part of the 50S ribosomal subunit. Contacts protein L32.

The chain is Large ribosomal subunit protein bL17 from Thermotoga sp. (strain RQ2).